The chain runs to 278 residues: Serine protease 57 (278 aa).

A signal peptide spans 1-31 (MVPGTGGGRDCLTLVVATALTQLLWLPGCCG). The region spanning 34–263 (IVGGHEVKPH…FVSWIWDVVR (230 aa)) is the Peptidase S1 domain. Cys59 and Cys75 are oxidised to a cystine. Residues His74 and Asp122 each act as charge relay system in the active site. Asn129 carries N-linked (GlcNAc...) asparagine glycosylation. Disulfide bonds link Cys157-Cys224, Cys188-Cys202, and Cys214-Cys239. Ser218 serves as the catalytic Charge relay system.

This sequence belongs to the peptidase S1 family. In terms of processing, after cleavage of the signal peptide, the N-terminus is probably further processed by CTSC. Processing by CTSC is probably required for accumulation in cytoplasmic granules; in the absence of CTSC the protein does not accumulate. Post-translationally, N-glycosylated.

It is found in the cytoplasmic granule lumen. Its subcellular location is the secreted. Serine protease that cleaves preferentially after Arg residues. Can also cleave after citrulline (deimidated arginine) and methylarginine residues. The polypeptide is Serine protease 57 (Prss57) (Rattus norvegicus (Rat)).